The following is a 1354-amino-acid chain: RNA-directed RNA polymerase VP1 (1354 aa).

It carries out the reaction RNA(n) + a ribonucleoside 5'-triphosphate = RNA(n+1) + diphosphate. In terms of biological role, RNA-directed RNA polymerase that is involved in transcription and genome replication. Following infection, it catalyzes the synthesis of fully conservative plus strands. After core assembly, which consists in recruitment of one capped plus-strand for each genomic segments and polymerase complexes, the polymerase switches mode and catalyzes the synthesis of complementary minus-strands. The chain is RNA-directed RNA polymerase VP1 from Cryphonectria parasitica mycoreovirus 1 (strain 9B21) (CpMYRV-1).